Here is a 476-residue protein sequence, read N- to C-terminus: Probable cytosolic Fe-S cluster assembly factor GI11683 (476 aa).

[4Fe-4S] cluster is bound by residues cysteine 23, cysteine 68, cysteine 71, cysteine 74, cysteine 187, cysteine 243, cysteine 395, and cysteine 399.

This sequence belongs to the NARF family.

Functionally, component of the cytosolic iron-sulfur (Fe/S) protein assembly machinery. Required for maturation of extramitochondrial Fe/S proteins. The protein is Probable cytosolic Fe-S cluster assembly factor GI11683 of Drosophila mojavensis (Fruit fly).